The following is a 334-amino-acid chain: Thioredoxin reductase aclT (334 aa).

FAD is bound by residues 16–19 (GGPA), 38–43 (NASIDR), I93, A122, D294, and 302–303 (TL).

It belongs to the class-II pyridine nucleotide-disulfide oxidoreductase family. In terms of assembly, homodimer. The cofactor is FAD.

Its pathway is mycotoxin biosynthesis. Thioredoxin reductase; part of the gene cluster that mediates the biosynthesis of aspirochlorine (or antibiotic A30641), an unusual halogenated spiro compound with distinctive antifungal properties due to selective inhibition of protein biosynthesis, and which is also active against bacteria, viruses, and murine tumor cells. The non-ribosomal peptide synthetase (NRPS) aclP is responsible the formation of the diketopiperazine (DKP) core from the condensation of 2 phenylalanine residues. One Phe residue is tailored into chlorotyrosine by hydroxylation and chlorination, whereas the second Phe undergoes an unprecedented C-C bond cleavage to be converted into glycine. After formation of the DKP, sulfur is incorporated into the DKP by conjugation with glutathione by aclG, followed by its stepwise degradation to the thiol by aclI, aclJ and aclK, and the dithiol oxidation by aclT. In addition, oxygenases (aclB, aclC, aclL and aclO) and O-methyltransferases (aclM and aclU) act as tailoring enzymes to produce the intermediate dechloroaspirochlorine. Ultimately, chlorination of dechloroaspirochlorine by the halogenase aclH is the last step in the aspirochlorine pathway. This chain is Thioredoxin reductase aclT, found in Aspergillus oryzae (strain ATCC 42149 / RIB 40) (Yellow koji mold).